A 227-amino-acid chain; its full sequence is 2,3-bisphosphoglycerate-dependent phosphoglycerate mutase (227 aa).

Residues 7–14 (RHGQSEWN), 20–21 (TG), R59, 86–89 (ERHY), K97, 113–114 (RR), and 182–183 (GN) contribute to the substrate site. The active-site Tele-phosphohistidine intermediate is the H8. E86 serves as the catalytic Proton donor/acceptor.

Belongs to the phosphoglycerate mutase family. BPG-dependent PGAM subfamily. In terms of assembly, homodimer.

It catalyses the reaction (2R)-2-phosphoglycerate = (2R)-3-phosphoglycerate. Its pathway is carbohydrate degradation; glycolysis; pyruvate from D-glyceraldehyde 3-phosphate: step 3/5. In terms of biological role, catalyzes the interconversion of 2-phosphoglycerate and 3-phosphoglycerate. In Neisseria gonorrhoeae (strain ATCC 700825 / FA 1090), this protein is 2,3-bisphosphoglycerate-dependent phosphoglycerate mutase.